The chain runs to 380 residues: Chaperone protein DnaJ (380 aa).

The 65-residue stretch at 5–69 (DYYEILGVSK…QKRAHYDQFG (65 aa)) folds into the J domain. Residues 135–217 (GKETDIEIPR…CGGTGRVKKR (83 aa)) form a CR-type zinc finger. Positions 148, 151, 165, 168, 191, 194, 205, and 208 each coordinate Zn(2+). 4 CXXCXGXG motif repeats span residues 148–155 (CDTCHGTG), 165–172 (CSYCHGTG), 191–198 (CPYCGGTG), and 205–212 (CTTCGGTG).

The protein belongs to the DnaJ family. Homodimer. Zn(2+) serves as cofactor.

The protein resides in the cytoplasm. Participates actively in the response to hyperosmotic and heat shock by preventing the aggregation of stress-denatured proteins and by disaggregating proteins, also in an autonomous, DnaK-independent fashion. Unfolded proteins bind initially to DnaJ; upon interaction with the DnaJ-bound protein, DnaK hydrolyzes its bound ATP, resulting in the formation of a stable complex. GrpE releases ADP from DnaK; ATP binding to DnaK triggers the release of the substrate protein, thus completing the reaction cycle. Several rounds of ATP-dependent interactions between DnaJ, DnaK and GrpE are required for fully efficient folding. Also involved, together with DnaK and GrpE, in the DNA replication of plasmids through activation of initiation proteins. In Geobacillus sp. (strain WCH70), this protein is Chaperone protein DnaJ.